The chain runs to 810 residues: Plasminogen (810 aa).

An N-terminal signal peptide occupies residues 1–19; the sequence is MEHKEVVLLLLLFLKSGQG. The PAN domain maps to 20 to 98; it reads EPLDDYVNTQ…RDVVLFEKKV (79 aa). 12 disulfides stabilise this stretch: C49/C73, C53/C61, C103/C181, C124/C164, C152/C176, C185/C262, C188/C316, C206/C245, C234/C257, C275/C352, C296/C335, and C324/C347. Kringle domains are found at residues 103–181 and 184–262; these read CKTG…ILEC and ECMH…IPRC. Residues 126 to 145 are disordered; that stretch reads KWSSTSPHRPRFSPATHPSE. Residues R136, D158, and R172 each coordinate L-lysine. O-linked (GalNAc...) serine glycosylation occurs at S268. Positions 275–352 constitute a Kringle 3 domain; that stretch reads CLKGTGENYR…RWEYCKIPSC (78 aa). N308 is a glycosylation site (N-linked (GlcNAc...) asparagine). T365 is a glycosylation site (O-linked (GalNAc...) threonine). Cystine bridges form between C377/C454, C398/C437, C426/C449, C481/C560, C502/C543, C531/C555, C567/C685, C577/C585, and C607/C623. Kringle domains follow at residues 377 to 454 and 481 to 560; these read CYHG…LKKC and CMFG…VPQC. The segment at 396 to 416 is disordered; sequence KKCQSWSSMTPHRHQKTPENY. D432 and R445 together coordinate L-lysine. The Peptidase S1 domain maps to 581 to 808; that stretch reads VVGGCVAHPH…FVTWIEGVMR (228 aa). S597 bears the Phosphoserine mark. Residues H622 and D665 each act as charge relay system in the active site. At S688 the chain carries Phosphoserine. Intrachain disulfides connect C699-C766, C729-C745, and C756-C784. The Charge relay system role is filled by S760.

The protein belongs to the peptidase S1 family. Plasminogen subfamily. As to quaternary structure, interacts (both mature PLG and the angiostatin peptide) with CSPG4 and AMOT. Interacts (via the Kringle domains) with HRG; the interaction tethers PLG to the cell surface and enhances its activation. Interacts (via Kringle 4 domain) with ADA; the interaction stimulates PLG activation when in complex with DPP4. Angiostatin: Interacts with ATP5F1A; the interaction inhibits most of the angiogenic effects of angiostatin. Interacts (plasmin) with iripin-8, a serine protease inhibitor from Ixodes ricinus saliva. Interacts (plasmin) with iripin-1, a serine protease inhibitor from Ixodes ricinus saliva. Interacts (plasmin) with Kazal-type trypsin inhibitor, a serine protease inhibitor from Aedes aegypti. (Microbial infection) Interacts with C.albicans GPD2; the interaction is direct and provides active plasmin on the surface of fungal cells. In terms of assembly, (Microbial infection) Interacts with Staphylococcus aureus protein FnbB; this interaction provides active plasmin on the surface of bacterial cells. As to quaternary structure, (Microbial infection) Interacts with P.falciparum (strain NF54) enolase ENO (via DKSLVK motif); the interaction occurs at the ookinete cell surface and is required for ookinete invasion of the mosquito midgut. (Microbial infection) Interacts with B.burgdorferi OspC. In terms of processing, N-linked glycan contains N-acetyllactosamine and sialic acid. O-linked glycans consist of Gal-GalNAc disaccharide modified with up to 2 sialic acid residues (microheterogeneity). Post-translationally, in the presence of the inhibitor, the activation involves only cleavage after Arg-580, yielding two chains held together by two disulfide bonds. In the absence of the inhibitor, the activation involves additionally the removal of the activation peptide. (Microbial infection) The Y.pestis Pla protein cleaves between Arg-580 and Val-581, generating plasmin which facilitates bacterial migration and infection. In terms of tissue distribution, present in plasma and many other extracellular fluids. It is synthesized in the liver.

It localises to the secreted. It catalyses the reaction Preferential cleavage: Lys-|-Xaa &gt; Arg-|-Xaa, higher selectivity than trypsin. Converts fibrin into soluble products.. With respect to regulation, converted into plasmin by plasminogen activators, both plasminogen and its activator being bound to fibrin. Activated with catalytic amounts of streptokinase. Plasmin activity inhibited by SERPINE2. In terms of biological role, plasmin dissolves the fibrin of blood clots and acts as a proteolytic factor in a variety of other processes including embryonic development, tissue remodeling, tumor invasion, and inflammation. In ovulation, weakens the walls of the Graafian follicle. It activates the urokinase-type plasminogen activator, collagenases and several complement zymogens, such as C1, C4 and C5. Cleavage of fibronectin and laminin leads to cell detachment and apoptosis. Also cleaves fibrin, thrombospondin and von Willebrand factor. Its role in tissue remodeling and tumor invasion may be modulated by CSPG4. Binds to cells. Angiostatin is an angiogenesis inhibitor that blocks neovascularization and growth of experimental primary and metastatic tumors in vivo. Functionally, (Microbial infection) ENO/enoloase from parasite P.falciparum (strain NF54) interacts with PLG present in the mosquito blood meal to promote the invasion of the mosquito midgut by the parasite ookinete. The catalytic active form, plasmin, is essential for the invasion of the mosquito midgut. Its function is as follows. (Microbial infection) Binds to OspC on the surface of B.burgdorferi cells, possibly conferring an extracellular protease activity on the bacteria that allows it to traverse host tissue. In terms of biological role, (Microbial infection) Interacts with dengue virus type 2 particles. Enhances dengue virus type 2 infection in Aedes aegypti mosquito midgut by increasing midgut internalization, resulting in higher infection rates and viral dissemination in mosquitoes. In Homo sapiens (Human), this protein is Plasminogen (PLG).